The sequence spans 466 residues: MPAPTTTLLIEGSFSELADEFAQYLDALRKSEGTTTIQAEISPLLEPLRQQEQSDAEPDRKQRDEVLKKLVSAASVLNNAPEKEIISAYNLLVHLIHYASDPDMFLSRICSYLAKPITSSAQFGPSLAISILSTIFNTLAPTDSSRFHVFLGIVAVIRQSGSTVAFEALKPQLTAQLPTWLSSWELDEEEAQRLHLAVADAAQAAGDPELAQTHILQALQTIPAAQASSKEARDLAIRALTSALTHPAVFDFTPLTASDAVQALRSSDSTLFELLEIFTADTLDAYEAFVTATPLAGISGGVLADAGEALQNKMRLLTLASLAASTPSRSLPYATIAASLRVPAEDVEKWVIDTIRAGLVEGKLSQLRSEFLVHRATYRVFGEKQWAEVQGRLMVWRRSLENVLGVLRTERERFVRESLQAAAAAEEAAQGKSNDKGNKSGDRRQRHGNNQQSQQQQQPQEVAAAE.

The disordered stretch occupies residues 40–62 (EISPLLEPLRQQEQSDAEPDRKQ). The 168-residue stretch at 211–378 (AQTHILQALQ…SEFLVHRATY (168 aa)) folds into the PCI domain. The tract at residues 424 to 466 (AAEEAAQGKSNDKGNKSGDRRQRHGNNQQSQQQQQPQEVAAAE) is disordered. Residues 433–443 (SNDKGNKSGDR) are compositionally biased toward basic and acidic residues. Residues 451–460 (QQSQQQQQPQ) are compositionally biased toward low complexity.

The protein belongs to the eIF-3 subunit M family. As to quaternary structure, component of the eukaryotic translation initiation factor 3 (eIF-3) complex.

It is found in the cytoplasm. Its function is as follows. Component of the eukaryotic translation initiation factor 3 (eIF-3) complex, which is involved in protein synthesis of a specialized repertoire of mRNAs and, together with other initiation factors, stimulates binding of mRNA and methionyl-tRNAi to the 40S ribosome. The eIF-3 complex specifically targets and initiates translation of a subset of mRNAs involved in cell proliferation. This is Eukaryotic translation initiation factor 3 subunit M from Aspergillus oryzae (strain ATCC 42149 / RIB 40) (Yellow koji mold).